A 367-amino-acid polypeptide reads, in one-letter code: Peptide chain release factor 2 (367 aa).

Gln-251 carries the N5-methylglutamine modification.

Belongs to the prokaryotic/mitochondrial release factor family. In terms of processing, methylated by PrmC. Methylation increases the termination efficiency of RF2.

It localises to the cytoplasm. Functionally, peptide chain release factor 2 directs the termination of translation in response to the peptide chain termination codons UGA and UAA. The protein is Peptide chain release factor 2 of Nautilia profundicola (strain ATCC BAA-1463 / DSM 18972 / AmH).